Consider the following 404-residue polypeptide: Sorting nexin-5 (404 aa).

A2 is subject to N-acetylalanine. The PX domain occupies 25-172 (LNVDPSLQID…HVFLEYDQDL (148 aa)). Residues 40 to 46 (SERDKVK), 99 to 105 (FDGPREK), and 113 to 116 (EGSM) each bind a 1,2-diacyl-sn-glycero-3-phospho-(1D-myo-inositol-4,5-bisphosphate). An interaction with DOCK1 region spans residues 169–261 (DQDLSVRRKN…HSLALEEPTV (93 aa)). Positions 183–200 (FGGFFKSVVKSADEVLFS) are membrane-binding amphipathic helix. S193 carries the phosphoserine modification. Positions 202-404 (VKEVDDFFEQ…QSCIDLFKNN (203 aa)) constitute a BAR domain. K275 carries the N6-acetyllysine modification.

This sequence belongs to the sorting nexin family. In terms of assembly, forms heterodimers with BAR domain-containing sorting nexins SNX1 and SNX2; does not homodimerize. The heterodimers are proposed to self-assemble into helical arrays on the membrane to stabilize and expand local membrane curvature underlying endosomal tubule formation. Thought to be a component of the originally described retromer complex (also called SNX-BAR retromer) which is a pentamer containing the heterotrimeric retromer cargo-selective complex (CSC), also described as vacuolar protein sorting subcomplex (VPS), and a heterodimeric membrane-deforming subcomplex formed between SNX1 or SNX2 and SNX5 or SNX6 (also called SNX-BAR subcomplex); the respective CSC and SNX-BAR subcomplexes associate with low affinity. Interacts with SNX1, SNX2, VPS26A, VPS29, VPS35, DCTN1, DOCK1, MIB1, PIP5K1C. Interacts with HGS; increased by PIP5K1C kinase activity and by PtdIns(3P) and/or PtdIns(3,4)P2. As to expression, detected in macrophages (at protein level).

It localises to the endosome. The protein localises to the early endosome. Its subcellular location is the early endosome membrane. It is found in the cell membrane. The protein resides in the cytoplasmic vesicle membrane. It localises to the cytoplasm. The protein localises to the cell projection. Its subcellular location is the phagocytic cup. It is found in the ruffle. Involved in several stages of intracellular trafficking. Interacts with membranes containing phosphatidylinositol lipids. Acts in part as component of the retromer membrane-deforming SNX-BAR subcomplex. The SNX-BAR retromer mediates retrograde transport of cargo proteins from endosomes to the trans-Golgi network (TGN) and is involved in endosome-to-plasma membrane transport for cargo protein recycling. The SNX-BAR subcomplex functions to deform the donor membrane into a tubular profile called endosome-to-TGN transport carrier (ETC). Does not have in vitro vesicle-to-membrane remodeling activity. Involved in retrograde transport of lysosomal enzyme receptor IGF2R. May function as link between endosomal transport vesicles and dynactin. Plays a role in the internalization of EGFR after EGF stimulation. Involved in EGFR endosomal sorting and degradation; the function involves PIP5K1C and is retromer-independent. Together with PIP5K1C facilitates HGS interaction with ubiquitinated EGFR, which initiates EGFR sorting to intraluminal vesicles (ILVs) of the multivesicular body for subsequent lysosomal degradation. Involved in E-cadherin sorting and degradation; inhibits PIP5K1C-mediated E-cadherin degradation. Plays a role in macropinocytosis. This chain is Sorting nexin-5 (Snx5), found in Mus musculus (Mouse).